Reading from the N-terminus, the 83-residue chain is Bublin coiled-coil protein (83 aa).

The disordered stretch occupies residues 1–24; the sequence is MSGPNGDLGMPVEAGAEGEEDGFG. Positions 25-74 form a coiled coil; sequence EAEYAAINSMLDQINSCLDHLEEKNDHLHARLQELLESNRQTRLEFQQQL. Phosphoserine is present on Ser-82.

The protein belongs to the UPF0184 (EST00098) family.

Its subcellular location is the cell junction. The protein localises to the cytoplasm. The protein resides in the cytoskeleton. In terms of biological role, essential for intermediate filament organization in intestinal cells, interacts with intermediate filament and regulates intestinal lumen morphology. This Homo sapiens (Human) protein is Bublin coiled-coil protein.